A 378-amino-acid polypeptide reads, in one-letter code: N-acetyldiaminopimelate deacetylase (378 aa).

The active site involves aspartate 72. Glutamate 131 acts as the Proton acceptor in catalysis.

It belongs to the peptidase M20A family. N-acetyldiaminopimelate deacetylase subfamily.

The catalysed reaction is N-acetyl-(2S,6S)-2,6-diaminopimelate + H2O = (2S,6S)-2,6-diaminopimelate + acetate. The protein operates within amino-acid biosynthesis; L-lysine biosynthesis via DAP pathway; LL-2,6-diaminopimelate from (S)-tetrahydrodipicolinate (acetylase route): step 3/3. Its function is as follows. Catalyzes the conversion of N-acetyl-diaminopimelate to diaminopimelate and acetate. This Enterococcus faecalis (strain ATCC 700802 / V583) protein is N-acetyldiaminopimelate deacetylase.